The chain runs to 622 residues: FERM domain-containing protein 6 (622 aa).

Residues 16 to 328 enclose the FERM domain; the sequence is RSVCIFLPND…NSHRLYMNLQ (313 aa). Residues 364-445 are disordered; the sequence is KRSRASGSSA…SGVESGGKDR (82 aa). Composition is skewed to low complexity over residues 384–395 and 425–438; these read HSTASHSSSHTS and SSMT…TSGV. Residue S522 is modified to Phosphoserine. T523 carries the post-translational modification Phosphothreonine. S525, S542, and S544 each carry phosphoserine.

The protein resides in the cytoplasm. It is found in the cell membrane. The chain is FERM domain-containing protein 6 (FRMD6) from Homo sapiens (Human).